A 204-amino-acid polypeptide reads, in one-letter code: Phosphoprotein p30 (204 aa).

The protein belongs to the asfivirus phosphoprotein p30 family. In terms of assembly, oligomer. Interacts with host HNRNPK. In terms of processing, phosphorylated on serine residues in the 115 N-terminal amino acids.

It is found in the host cytoplasm. Its subcellular location is the host nucleus. The protein resides in the virion. Functionally, modifies the subcellular distribution of heterogeneous nuclear ribonucleoprotein K (HNRNPK) and may contribute to modulate HNRNPK functions related to processing and export of mRNAs during ASFV infection. Necessary for virus internalization. In African swine fever virus (strain Badajoz 1971 Vero-adapted) (Ba71V), this protein is Phosphoprotein p30.